Consider the following 249-residue polypeptide: Adenylate kinase (249 aa).

Position 43–48 (43–48 (GAGKGT)) interacts with ATP. Positions 63 to 92 (ATGDMLRAQVAAKTALGVEAKKIMDQGGLV) are NMP. AMP is bound by residues threonine 64, arginine 69, 90–92 (GLV), 119–122 (GFPR), and glutamine 126. The interval 160–197 (GRLVHPASGRSYHKLFNPPKKNMIDDITGEPLVQRSDD) is LID. Residues arginine 161 and 170–171 (SY) contribute to the ATP site. AMP is bound by residues arginine 194 and arginine 205. Glutamine 233 provides a ligand contact to ATP.

Belongs to the adenylate kinase family. AK2 subfamily. As to quaternary structure, monomer.

It is found in the cytoplasm. The protein localises to the cytosol. The protein resides in the mitochondrion intermembrane space. It carries out the reaction AMP + ATP = 2 ADP. Functionally, catalyzes the reversible transfer of the terminal phosphate group between ATP and AMP. Plays an important role in cellular energy homeostasis and in adenine nucleotide metabolism. Adenylate kinase activity is critical for regulation of the phosphate utilization and the AMP de novo biosynthesis pathways. The protein is Adenylate kinase of Scheffersomyces stipitis (strain ATCC 58785 / CBS 6054 / NBRC 10063 / NRRL Y-11545) (Yeast).